The primary structure comprises 282 residues: Deoxyribonuclease-1 (282 aa).

Positions 1-22 are cleaved as a signal peptide; it reads MRGARLTGALLALAGLLQVALS. The N-linked (GlcNAc...) asparagine glycan is linked to asparagine 40. Glutamate 100 is a catalytic residue. Cysteine 123 and cysteine 126 are oxidised to a cystine. Asparagine 128 carries N-linked (GlcNAc...) asparagine glycosylation. Residue histidine 156 is part of the active site. A disulfide bond links cysteine 195 and cysteine 231.

It belongs to the DNase I family. It depends on Ca(2+) as a cofactor. The cofactor is Mg(2+).

The protein resides in the secreted. Its subcellular location is the zymogen granule. The protein localises to the nucleus envelope. It catalyses the reaction Endonucleolytic cleavage to 5'-phosphodinucleotide and 5'-phosphooligonucleotide end-products.. Serum endocuclease secreted into body fluids by a wide variety of exocrine and endocrine organs. Expressed by non-hematopoietic tissues and preferentially cleaves protein-free DNA. Among other functions, seems to be involved in cell death by apoptosis. Binds specifically to G-actin and blocks actin polymerization. Together with DNASE1L3, plays a key role in degrading neutrophil extracellular traps (NETs). NETs are mainly composed of DNA fibers and are released by neutrophils to bind pathogens during inflammation. Degradation of intravascular NETs by DNASE1 and DNASE1L3 is required to prevent formation of clots that obstruct blood vessels and cause organ damage following inflammation. This chain is Deoxyribonuclease-1 (DNASE1), found in Equus caballus (Horse).